A 250-amino-acid polypeptide reads, in one-letter code: NAD(P)H-quinone oxidoreductase subunit K, chloroplastic (250 aa).

Residues Cys-61, Cys-62, Cys-126, and Cys-157 each coordinate [4Fe-4S] cluster.

This sequence belongs to the complex I 20 kDa subunit family. NDH is composed of at least 16 different subunits, 5 of which are encoded in the nucleus. [4Fe-4S] cluster is required as a cofactor.

It is found in the plastid. The protein resides in the chloroplast thylakoid membrane. It catalyses the reaction a plastoquinone + NADH + (n+1) H(+)(in) = a plastoquinol + NAD(+) + n H(+)(out). The enzyme catalyses a plastoquinone + NADPH + (n+1) H(+)(in) = a plastoquinol + NADP(+) + n H(+)(out). Functionally, NDH shuttles electrons from NAD(P)H:plastoquinone, via FMN and iron-sulfur (Fe-S) centers, to quinones in the photosynthetic chain and possibly in a chloroplast respiratory chain. The immediate electron acceptor for the enzyme in this species is believed to be plastoquinone. Couples the redox reaction to proton translocation, and thus conserves the redox energy in a proton gradient. The protein is NAD(P)H-quinone oxidoreductase subunit K, chloroplastic of Angiopteris evecta (Mule's foot fern).